Reading from the N-terminus, the 310-residue chain is Vomeronasal type-1 receptor 47 (310 aa).

Residues 1–16 are Extracellular-facing; the sequence is MNENSRLHTHSNIRNT. Residues 17–37 traverse the membrane as a helical segment; the sequence is FFSEIGIGISGNSFLLLFHII. Residues 38 to 49 lie on the Cytoplasmic side of the membrane; it reads KFFRGHRPRLTD. The chain crosses the membrane as a helical span at residues 50–70; sequence LPIGLLSLIHLLMLLVAAVIA. The Extracellular portion of the chain corresponds to 71 to 91; it reads TDIFISWRGWNDIICKFLVYL. A disulfide bridge links C85 with C172. A helical membrane pass occupies residues 92–114; sequence YRSLRGLSLCTTSMLSVLQAIIL. The Cytoplasmic segment spans residues 115–131; it reads SPRSYCLAKFKRKSSHN. A helical membrane pass occupies residues 132-152; that stretch reads ISCAIIFLSVLYMSISSHLFI. At 153–193 the chain is on the extracellular side; it reads SITATLNLTMNNFLYVSQSCSLLPLSYLMQSMYSTLLVLRE. N159 is a glycosylation site (N-linked (GlcNAc...) asparagine). Residues 194–214 traverse the membrane as a helical segment; that stretch reads VFLIGLMVLSTSYMVALLCMH. Residues 215–238 are Cytoplasmic-facing; sequence RKQAQNLQGTSLSLKTAPEQRATQ. Residues 239-259 traverse the membrane as a helical segment; it reads TILMLMTFFVLMSIFDSIVSS. Over 260–269 the chain is Extracellular; the sequence is SRAMFLDDST. The helical transmembrane segment at 270–290 threads the bilayer; that stretch reads CYSIYIFVMHIYATVSPFVFM. Topologically, residues 291-310 are cytoplasmic; sequence STEKHLVNFFRSMCEWIINM.

The protein belongs to the G-protein coupled receptor 1 family.

The protein localises to the cell membrane. In terms of biological role, putative pheromone receptor implicated in the regulation of social and reproductive behavior. The polypeptide is Vomeronasal type-1 receptor 47 (Vmn1r47) (Mus musculus (Mouse)).